Consider the following 105-residue polypeptide: Large ribosomal subunit protein eL42z/eL42y (105 aa).

Positions 28 to 57 (YKKGKDSLAAQGKRRYDRKQSGYGGQTKPV) are disordered.

Belongs to the eukaryotic ribosomal protein eL42 family.

The chain is Large ribosomal subunit protein eL42z/eL42y (RPL36AA) from Arabidopsis thaliana (Mouse-ear cress).